A 1345-amino-acid chain; its full sequence is Mediator of RNA polymerase II transcription subunit 13 (1345 aa).

2 disordered regions span residues 363-387 (KSQTNQQQTSSNSKVSPSDAASPYP) and 402-537 (FMAS…AESG). Residues 364-375 (SQTNQQQTSSNS) are compositionally biased toward low complexity. The span at 406–415 (PSVSGNSNEL) shows a compositional bias: polar residues. The segment covering 469–482 (LFGEEDEDEDDADL) has biased composition (acidic residues). Residues 486–501 (SNNDSTGESNANNSKG) are compositionally biased toward polar residues.

It belongs to the Mediator complex subunit 13 family. In terms of assembly, component of the SRB8-11 complex, which itself associates with the Mediator complex.

It localises to the nucleus. Functionally, component of the SRB8-11 complex. The SRB8-11 complex is a regulatory module of the Mediator complex which is itself involved in regulation of basal and activated RNA polymerase II-dependent transcription. The SRB8-11 complex may be involved in the transcriptional repression of a subset of genes regulated by Mediator. It may inhibit the association of the Mediator complex with RNA polymerase II to form the holoenzyme complex. The protein is Mediator of RNA polymerase II transcription subunit 13 (SSN2) of Candida glabrata (strain ATCC 2001 / BCRC 20586 / JCM 3761 / NBRC 0622 / NRRL Y-65 / CBS 138) (Yeast).